A 494-amino-acid chain; its full sequence is UDP-N-acetylmuramoyl-L-alanyl-D-glutamate--L-lysine ligase (494 aa).

Serine 30 contacts UDP-N-acetyl-alpha-D-muramoyl-L-alanyl-D-glutamate. 110–116 serves as a coordination point for ATP; that stretch reads GTNGKTS. Residues 152–153, serine 179, and arginine 187 contribute to the UDP-N-acetyl-alpha-D-muramoyl-L-alanyl-D-glutamate site; that span reads TT. Lysine 219 is subject to N6-carboxylysine. Residues 406 to 409 carry the L-lysine recognition motif motif; the sequence is DNPA.

This sequence belongs to the MurCDEF family. MurE subfamily. Carboxylation is probably crucial for Mg(2+) binding and, consequently, for the gamma-phosphate positioning of ATP.

The protein localises to the cytoplasm. It catalyses the reaction UDP-N-acetyl-alpha-D-muramoyl-L-alanyl-D-glutamate + L-lysine + ATP = UDP-N-acetyl-alpha-D-muramoyl-L-alanyl-gamma-D-glutamyl-L-lysine + ADP + phosphate + H(+). The protein operates within cell wall biogenesis; peptidoglycan biosynthesis. Catalyzes the addition of L-lysine to the nucleotide precursor UDP-N-acetylmuramoyl-L-alanyl-D-glutamate (UMAG) in the biosynthesis of bacterial cell-wall peptidoglycan. In Staphylococcus aureus (strain MW2), this protein is UDP-N-acetylmuramoyl-L-alanyl-D-glutamate--L-lysine ligase.